Consider the following 396-residue polypeptide: Gap junction gamma-1 protein (396 aa).

Residues 1–22 (MSWSFLTRLLEEIHNHSTFVGK) are Cytoplasmic-facing. A helical membrane pass occupies residues 23-45 (IWLTVLIVFRIVLTAVGGESIYY). At 46-75 (DEQSKFVCNTEQPGCENVCYDAFAPLSHVR) the chain is on the extracellular side. The helical transmembrane segment at 76-95 (FWVFQIILVATPSVMYLGYA) threads the bilayer. At 96–175 (IHKIAKMEHG…RRIREDGLMK (80 aa)) the chain is on the cytoplasmic side. The interval 146 to 165 (LESEKENKDQNQSKPKHDGR) is disordered. The segment covering 147–156 (ESEKENKDQN) has biased composition (basic and acidic residues). The chain crosses the membrane as a helical span at residues 176–198 (IYVLQLLARTVFEVGFLVGQYFL). The Extracellular segment spans residues 199 to 228 (YGFQVHPFYVCSRLPCPHKIDCFISRPTEK). The helical transmembrane segment at 229–248 (TIFLLIMYGVTGLCLLLNIW) threads the bilayer. Over 249–396 (EMLHLGFGTI…SGDGKTSVWI (148 aa)) the chain is Cytoplasmic. The interval 356-396 (YNHQNNPHGSREKKAKVGSKAGSNKSSASSKSGDGKTSVWI) is disordered. Over residues 373–396 (GSKAGSNKSSASSKSGDGKTSVWI) the composition is skewed to low complexity.

This sequence belongs to the connexin family. Gamma-type subfamily. As to quaternary structure, a connexon is composed of a hexamer of connexins. Interacts with CNST.

Its subcellular location is the cell membrane. It is found in the cell junction. The protein localises to the gap junction. In terms of biological role, one gap junction consists of a cluster of closely packed pairs of transmembrane channels, the connexons, through which materials of low MW diffuse from one cell to a neighboring cell. In Bos taurus (Bovine), this protein is Gap junction gamma-1 protein (GJC1).